We begin with the raw amino-acid sequence, 461 residues long: Porin AaxA (461 aa).

Residues 1-22 form the signal peptide; the sequence is MSFRSVLLTALLSLSFTTTMQA.

Belongs to the OprB family.

It localises to the cell outer membrane. Functionally, facilitates L-arginine uptake, as part of the AaxABC system. The arginine uptake by the bacterium in the macrophage may be a virulence factor against the host innate immune response. This is Porin AaxA (aaxA) from Chlamydia trachomatis serovar L2 (strain ATCC VR-902B / DSM 19102 / 434/Bu).